The chain runs to 771 residues: Rho guanine nucleotide exchange factor 6 (771 aa).

Residues 1 to 111 (MNPEERLVTW…TLLAVNKATE (111 aa)) form the Calponin-homology (CH) domain. The interval 115–157 (SERPCGRSSSLSAATSSQTNPQVAVPSTAPEQHSEEKAEMTEN) is disordered. The segment covering 122–131 (SSSLSAATSS) has biased composition (low complexity). Residue Ser-126 is modified to Phosphoserine. Thr-133 carries the post-translational modification Phosphothreonine. The 60-residue stretch at 159–218 (SHQLIVKARFNFKQTNEDELSVCKGDIIYVTRVEEGGWWEGTLNGRTGWFPSNYVREIKP) folds into the SH3 domain. At Ser-224 the chain carries Phosphoserine. A DH domain is found at 240-420 (YYTVVLQNIL…KTLMGQCQDL (181 aa)). The region spanning 442 to 547 (DIKTLGNVIF…WMEQLNRLTK (106 aa)) is the PH domain. The residue at position 487 (Ser-487) is a Phosphoserine. The span at 556-572 (SKTSSSSCSTHSSFSST) shows a compositional bias: low complexity. Residues 556 to 580 (SKTSSSSCSTHSSFSSTGQPRGPLE) are disordered. Ser-639 and Ser-679 each carry phosphoserine.

As to quaternary structure, interacts with PAK kinases through the SH3 domain. Interacts with GIT1. Component of cytoplasmic complexes, which also contain PXN, GIT1 and PAK1. Interacts with BIN2. Identified in a complex with BIN2 and GIT2. Interacts with PARVB. Interacts with PARVG; the guanine nucleotide exchange factor activity of ARHGEF6 is essential for PARVG-induced enhancement of cell spreading. Detected in adult heart, spleen, lung, skeletal muscle, kidney and testis. Detected throughout embryogenesis.

The protein resides in the cell projection. Its subcellular location is the lamellipodium. Its function is as follows. Acts as a RAC1 guanine nucleotide exchange factor (GEF). In Mus musculus (Mouse), this protein is Rho guanine nucleotide exchange factor 6 (Arhgef6).